Here is a 96-residue protein sequence, read N- to C-terminus: Protein Vpr (96 aa).

The tract at residues 1 to 42 (MEQAPADQGPQREPHNEWTLELLEELKQEAVRHFPRIWLHSL) is homooligomerization. Ser79, Ser94, and Ser96 each carry phosphoserine; by host.

The protein belongs to the HIV-1 VPR protein family. In terms of assembly, homooligomer, may form homodimer. Interacts with p6-gag region of the Pr55 Gag precursor protein through a (Leu-X-X)4 motif near the C-terminus of the P6gag protein. Interacts with host UNG. May interact with host RAD23A/HHR23A. Interacts with host VPRBP/DCAF1, leading to hijack the CUL4A-RBX1-DDB1-DCAF1/VPRBP complex, mediating ubiquitination of host proteins such as TERT and ZGPAT and arrest of the cell cycle in G2 phase. Post-translationally, phosphorylated on several residues by host. These phosphorylations regulate VPR activity for the nuclear import of the HIV-1 pre-integration complex.

The protein localises to the virion. The protein resides in the host nucleus. It is found in the host extracellular space. In terms of biological role, during virus replication, may deplete host UNG protein, and incude G2-M cell cycle arrest. Acts by targeting specific host proteins for degradation by the 26S proteasome, through association with the cellular CUL4A-DDB1 E3 ligase complex by direct interaction with host VPRPB/DCAF-1. Cell cycle arrest reportedly occurs within hours of infection and is not blocked by antiviral agents, suggesting that it is initiated by the VPR carried into the virion. Additionally, VPR induces apoptosis in a cell cycle dependent manner suggesting that these two effects are mechanistically linked. Detected in the serum and cerebrospinal fluid of AIDS patient, VPR may also induce cell death to bystander cells. Functionally, during virus entry, plays a role in the transport of the viral pre-integration (PIC) complex to the host nucleus. This function is crucial for viral infection of non-dividing macrophages. May act directly at the nuclear pore complex, by binding nucleoporins phenylalanine-glycine (FG)-repeat regions. In Homo sapiens (Human), this protein is Protein Vpr.